A 444-amino-acid chain; its full sequence is Chitinase-like protein Idgf1 (444 aa).

A signal peptide spans 1-20 (MTSLLFVILNIILTLHLCAG). The region spanning 29–444 (KRLICYYDAQ…PILRSVRGHL (416 aa)) is the GH18 domain. Cys33 and Cys60 are oxidised to a cystine. N-linked (GlcNAc...) asparagine glycans are attached at residues Asn213, Asn225, and Asn335. A disulfide bridge links Cys346 with Cys429.

It belongs to the glycosyl hydrolase 18 family. IDGF subfamily. Glycosylated.

The protein localises to the secreted. Cooperates with insulin-like peptides to stimulate the proliferation, polarization and motility of imaginal disk cells. May act by stabilizing the binding of insulin-like peptides to its receptor through a simultaneous interaction with both molecules to form a multiprotein signaling complex. This chain is Chitinase-like protein Idgf1 (Idgf1), found in Glossina morsitans morsitans (Savannah tsetse fly).